The following is a 351-amino-acid chain: Uroporphyrinogen decarboxylase (351 aa).

Substrate-binding positions include 26-30 (RQAGR), Asp-76, Tyr-153, Ser-208, and His-323.

Belongs to the uroporphyrinogen decarboxylase family. Homodimer.

It is found in the cytoplasm. It catalyses the reaction uroporphyrinogen III + 4 H(+) = coproporphyrinogen III + 4 CO2. It participates in porphyrin-containing compound metabolism; protoporphyrin-IX biosynthesis; coproporphyrinogen-III from 5-aminolevulinate: step 4/4. Catalyzes the decarboxylation of four acetate groups of uroporphyrinogen-III to yield coproporphyrinogen-III. This Prochlorococcus marinus (strain MIT 9211) protein is Uroporphyrinogen decarboxylase.